Here is a 252-residue protein sequence, read N- to C-terminus: Probable transcriptional regulatory protein RF_0799 (252 aa).

The interval 1–21 (MAGHSKFKNIQHRKGAQDKKR) is disordered.

The protein belongs to the TACO1 family.

The protein resides in the cytoplasm. This chain is Probable transcriptional regulatory protein RF_0799, found in Rickettsia felis (strain ATCC VR-1525 / URRWXCal2) (Rickettsia azadi).